Here is a 948-residue protein sequence, read N- to C-terminus: Protocadherin alpha-2 (948 aa).

A signal peptide spans 1–22 (MASSIRRGRGAWTRLLSLLLLA). The Extracellular portion of the chain corresponds to 23-697 (AWEVGSGQLR…GSEATLVDVN (675 aa)). Cadherin domains are found at residues 30-133 (QLRY…PPIF), 157-242 (ASDA…EPTF), 243-350 (AQSV…TPEV), 351-455 (SITS…APAF), 456-565 (AQPE…APAL), and 588-678 (GHVV…APKA). N-linked (GlcNAc...) asparagine glycosylation is found at asparagine 257, asparagine 265, asparagine 362, and asparagine 548. The chain crosses the membrane as a helical span at residues 698-718 (VYLIIAICAVSSLLVLTVLLY). At 719-948 (TALRCSVPPT…GNSTTDNSDQ (230 aa)) the chain is on the cytoplasmic side. Residues 734 to 737 (PGKP) form a PXXP 1 repeat. The 5 X 4 AA repeats of P-X-X-P stretch occupies residues 734-892 (PGKPTLVCSS…PDKFIIPGSP (159 aa)). Disordered regions lie at residues 754–801 (RRQR…RQPN), 829–854 (GPGGPDQQWPTVSSATPEPEAGEVSP), and 868–948 (KYGP…NSDQ). The segment covering 783 to 795 (AEEKQLSESEYVG) has biased composition (basic and acidic residues). PXXP repeat units follow at residues 797–800 (PRQP), 830–833 (PGGP), 871–874 (PGNP), and 889–892 (PGSP). The span at 907–921 (DKSDFITFGKKEETK) shows a compositional bias: basic and acidic residues.

It localises to the cell membrane. Potential calcium-dependent cell-adhesion protein. May be involved in the establishment and maintenance of specific neuronal connections in the brain. The protein is Protocadherin alpha-2 (PCDHA2) of Homo sapiens (Human).